The following is a 182-amino-acid chain: Ribosome maturation factor RimM (182 aa).

The PRC barrel domain occupies 103–182; it reads DGSYYWKDLM…TIEVDWDPGF (80 aa).

This sequence belongs to the RimM family. In terms of assembly, binds ribosomal protein uS19.

The protein resides in the cytoplasm. Functionally, an accessory protein needed during the final step in the assembly of 30S ribosomal subunit, possibly for assembly of the head region. Essential for efficient processing of 16S rRNA. May be needed both before and after RbfA during the maturation of 16S rRNA. It has affinity for free ribosomal 30S subunits but not for 70S ribosomes. The protein is Ribosome maturation factor RimM of Citrobacter koseri (strain ATCC BAA-895 / CDC 4225-83 / SGSC4696).